The primary structure comprises 426 residues: Enolase (426 aa).

(2R)-2-phosphoglycerate is bound at residue Q165. Residue E207 is the Proton donor of the active site. Residues D244, E285, and D312 each contribute to the Mg(2+) site. Residues K337, R366, S367, and K388 each coordinate (2R)-2-phosphoglycerate. K337 acts as the Proton acceptor in catalysis.

It belongs to the enolase family. It depends on Mg(2+) as a cofactor.

The protein localises to the cytoplasm. It is found in the secreted. It localises to the cell surface. The enzyme catalyses (2R)-2-phosphoglycerate = phosphoenolpyruvate + H2O. The protein operates within carbohydrate degradation; glycolysis; pyruvate from D-glyceraldehyde 3-phosphate: step 4/5. Catalyzes the reversible conversion of 2-phosphoglycerate (2-PG) into phosphoenolpyruvate (PEP). It is essential for the degradation of carbohydrates via glycolysis. The chain is Enolase from Thermosynechococcus vestitus (strain NIES-2133 / IAM M-273 / BP-1).